Here is a 224-residue protein sequence, read N- to C-terminus: Zinc finger protein 22 (224 aa).

The disordered stretch occupies residues 1-34 (MRLAKPKAGISRSSSQGKAYENKRKTGRQRQKWG). N6-acetyllysine is present on residues lysine 18 and lysine 23. The residue at position 49 (serine 49) is a Phosphoserine. 5 C2H2-type zinc fingers span residues 55 to 77 (YKCTECEKSFSQSSTLFQHQKIH), 83 to 105 (HKCADCGKSFFQSSNLIQHRRIH), 111 to 133 (YKCDECGESFKQSSNLIQHQRIH), 139 to 161 (YQCDECGRCFSQSSHLIQHQRTH), and 167 to 189 (YQCSECGKCFSQSSHLRQHMKVH).

The protein belongs to the krueppel C2H2-type zinc-finger protein family. In terms of tissue distribution, in the embryo, expressed in developing craniofacial structures including dental epithelium of maxillary molar tooth organs, tongue epithelium and muscle, and craniofacial bone osteoblasts. In the adult, expressed in mesoderm-derived tissues such as skeletal muscle, heart, kidney and liver. Intermediate expression in spleen, thymus and brain. Low levels in endoderm-derived tissues such as intestine and colon.

The protein localises to the nucleus. Its function is as follows. Binds DNA through the consensus sequence 5'-CAATG-3'. May be involved in transcriptional regulation and may play a role in tooth formation. The chain is Zinc finger protein 22 (ZNF22) from Homo sapiens (Human).